The sequence spans 252 residues: MNTKVKIDKLNVHFGQTHAVKDVSIDVPENTVTAIIGPSGCGKSTMLRSLNRMHDLFPNARVTGKVLLDGNDIYDRKVDPVSIRRRVGMVFQKPNPFPAMSIYDNVVAGYKLNGRVKKSDADEIVETSLRRVALWDEVKDRLKSNSMELSGGQQQRLCIARTIAVQPEVILMDEPASALDPISTLKIEELIEELTEKYTIIIVTHNMQQAARVSDYTAFFYMGDLVEWGETKKLFTTPEKKQTEDYITGRFG.

Residues 5 to 247 (VKIDKLNVHF…PEKKQTEDYI (243 aa)) enclose the ABC transporter domain. Residue 37 to 44 (GPSGCGKS) coordinates ATP.

This sequence belongs to the ABC transporter superfamily. Phosphate importer (TC 3.A.1.7) family. As to quaternary structure, the complex is composed of two ATP-binding proteins (PstB), two transmembrane proteins (PstC and PstA) and a solute-binding protein (PstS).

The protein localises to the cell inner membrane. It catalyses the reaction phosphate(out) + ATP + H2O = ADP + 2 phosphate(in) + H(+). In terms of biological role, part of the ABC transporter complex PstSACB involved in phosphate import. Responsible for energy coupling to the transport system. The sequence is that of Phosphate import ATP-binding protein PstB from Geobacter metallireducens (strain ATCC 53774 / DSM 7210 / GS-15).